Here is a 207-residue protein sequence, read N- to C-terminus: Large ribosomal subunit protein uL4 (207 aa).

The protein belongs to the universal ribosomal protein uL4 family. In terms of assembly, part of the 50S ribosomal subunit.

Functionally, one of the primary rRNA binding proteins, this protein initially binds near the 5'-end of the 23S rRNA. It is important during the early stages of 50S assembly. It makes multiple contacts with different domains of the 23S rRNA in the assembled 50S subunit and ribosome. In terms of biological role, forms part of the polypeptide exit tunnel. The sequence is that of Large ribosomal subunit protein uL4 from Pelagibacter ubique (strain HTCC1062).